The primary structure comprises 324 residues: tRNA U34 carboxymethyltransferase (324 aa).

Carboxy-S-adenosyl-L-methionine is bound by residues lysine 91, tryptophan 105, lysine 110, glycine 130, 152-154 (DPS), 181-182 (IE), methionine 196, tyrosine 200, and arginine 315.

Belongs to the class I-like SAM-binding methyltransferase superfamily. CmoB family. Homotetramer.

The enzyme catalyses carboxy-S-adenosyl-L-methionine + 5-hydroxyuridine(34) in tRNA = 5-carboxymethoxyuridine(34) in tRNA + S-adenosyl-L-homocysteine + H(+). Catalyzes carboxymethyl transfer from carboxy-S-adenosyl-L-methionine (Cx-SAM) to 5-hydroxyuridine (ho5U) to form 5-carboxymethoxyuridine (cmo5U) at position 34 in tRNAs. The sequence is that of tRNA U34 carboxymethyltransferase from Photobacterium profundum (strain SS9).